Reading from the N-terminus, the 66-residue chain is Beta-toxin Ct71 (66 aa).

An LCN-type CS-alpha/beta domain is found at 1-66; that stretch reads KEGYIVNYHD…VWPLPKKTCN (66 aa). Cystine bridges form between Cys12–Cys65, Cys16–Cys41, Cys25–Cys46, and Cys29–Cys48. Position 66 is an asparagine amide (Asn66).

This sequence belongs to the long (4 C-C) scorpion toxin superfamily. Sodium channel inhibitor family. Beta subfamily. As to expression, expressed by the venom gland.

It localises to the secreted. In terms of biological role, beta toxins bind voltage-independently at site-4 of sodium channels (Nav) and shift the voltage of activation toward more negative potentials thereby affecting sodium channel activation and promoting spontaneous and repetitive firing. Lethal to mice. The sequence is that of Beta-toxin Ct71 from Centruroides tecomanus (Scorpion).